Here is an 85-residue protein sequence, read N- to C-terminus: RNA-binding protein Hfq (85 aa).

The Sm domain maps to 9-68 (DPFLNALRRERIPVSIYLVNGIKLQGQIESFDQFVVLLKNTVSQMVYKHAISTVVPARIP).

The protein belongs to the Hfq family. Homohexamer.

Its function is as follows. RNA chaperone that binds small regulatory RNA (sRNAs) and mRNAs to facilitate mRNA translational regulation in response to envelope stress, environmental stress and changes in metabolite concentrations. Also binds with high specificity to tRNAs. The sequence is that of RNA-binding protein Hfq from Idiomarina loihiensis (strain ATCC BAA-735 / DSM 15497 / L2-TR).